Reading from the N-terminus, the 368-residue chain is tRNA-specific 2-thiouridylase MnmA (368 aa).

Residues 11–18 and Met-37 contribute to the ATP site; that span reads GMSGGVDS. The tract at residues 97–99 is interaction with target base in tRNA; the sequence is NPD. The active-site Nucleophile is Cys-102. Cysteines 102 and 199 form a disulfide. Gly-127 contributes to the ATP binding site. An interaction with tRNA region spans residues 149 to 151; it reads KDQ. The Cysteine persulfide intermediate role is filled by Cys-199. The interval 311-312 is interaction with tRNA; sequence RY.

Belongs to the MnmA/TRMU family. Interacts with TusE.

It localises to the cytoplasm. It carries out the reaction S-sulfanyl-L-cysteinyl-[protein] + uridine(34) in tRNA + AH2 + ATP = 2-thiouridine(34) in tRNA + L-cysteinyl-[protein] + A + AMP + diphosphate + H(+). In terms of biological role, catalyzes the 2-thiolation of uridine at the wobble position (U34) of tRNA(Lys), tRNA(Glu) and tRNA(Gln), leading to the formation of s(2)U34, the first step of tRNA-mnm(5)s(2)U34 synthesis. Sulfur is provided by IscS, via a sulfur-relay system. Binds ATP and its substrate tRNAs. The chain is tRNA-specific 2-thiouridylase MnmA from Citrobacter koseri (strain ATCC BAA-895 / CDC 4225-83 / SGSC4696).